The following is a 133-amino-acid chain: Small ribosomal subunit protein uS8 (133 aa).

Belongs to the universal ribosomal protein uS8 family. As to quaternary structure, part of the 30S ribosomal subunit.

In terms of biological role, one of the primary rRNA binding proteins, it binds directly to 16S rRNA central domain where it helps coordinate assembly of the platform of the 30S subunit. The polypeptide is Small ribosomal subunit protein uS8 (Ignicoccus hospitalis (strain KIN4/I / DSM 18386 / JCM 14125)).